We begin with the raw amino-acid sequence, 205 residues long: Guanylate kinase (205 aa).

Residues 7–185 enclose the Guanylate kinase-like domain; it reads GNIFIISAAS…AEGDLLHIVN (179 aa). 14–21 provides a ligand contact to ATP; that stretch reads AASGTGKT.

The protein belongs to the guanylate kinase family.

It is found in the cytoplasm. It carries out the reaction GMP + ATP = GDP + ADP. Functionally, essential for recycling GMP and indirectly, cGMP. The protein is Guanylate kinase of Neisseria gonorrhoeae (strain ATCC 700825 / FA 1090).